A 343-amino-acid chain; its full sequence is NADH-quinone oxidoreductase subunit H (343 aa).

Transmembrane regions (helical) follow at residues V19–Y39, A89–I109, L124–A144, A158–A178, W198–T218, I257–F277, P279–F299, and L314–M334.

It belongs to the complex I subunit 1 family. As to quaternary structure, NDH-1 is composed of 14 different subunits. Subunits NuoA, H, J, K, L, M, N constitute the membrane sector of the complex.

It localises to the cell inner membrane. It carries out the reaction a quinone + NADH + 5 H(+)(in) = a quinol + NAD(+) + 4 H(+)(out). In terms of biological role, NDH-1 shuttles electrons from NADH, via FMN and iron-sulfur (Fe-S) centers, to quinones in the respiratory chain. The immediate electron acceptor for the enzyme in this species is believed to be ubiquinone. Couples the redox reaction to proton translocation (for every two electrons transferred, four hydrogen ions are translocated across the cytoplasmic membrane), and thus conserves the redox energy in a proton gradient. This subunit may bind ubiquinone. In Thiobacillus denitrificans (strain ATCC 25259 / T1), this protein is NADH-quinone oxidoreductase subunit H.